We begin with the raw amino-acid sequence, 171 residues long: Peptide deformylase (171 aa).

Residues cysteine 91 and histidine 133 each contribute to the Fe cation site. Glutamate 134 is a catalytic residue. Histidine 137 provides a ligand contact to Fe cation.

It belongs to the polypeptide deformylase family. Fe(2+) is required as a cofactor.

It carries out the reaction N-terminal N-formyl-L-methionyl-[peptide] + H2O = N-terminal L-methionyl-[peptide] + formate. Functionally, removes the formyl group from the N-terminal Met of newly synthesized proteins. Requires at least a dipeptide for an efficient rate of reaction. N-terminal L-methionine is a prerequisite for activity but the enzyme has broad specificity at other positions. This chain is Peptide deformylase, found in Cronobacter sakazakii (strain ATCC BAA-894) (Enterobacter sakazakii).